The sequence spans 130 residues: Small ribosomal subunit protein uS11 (130 aa).

Belongs to the universal ribosomal protein uS11 family. Part of the 30S ribosomal subunit. Interacts with proteins S7 and S18. Binds to IF-3.

Functionally, located on the platform of the 30S subunit, it bridges several disparate RNA helices of the 16S rRNA. Forms part of the Shine-Dalgarno cleft in the 70S ribosome. This Thermoanaerobacter sp. (strain X514) protein is Small ribosomal subunit protein uS11.